A 125-amino-acid chain; its full sequence is Small ribosomal subunit protein uS12 (125 aa).

Positions 1–24 (MPTISQLVRKPRKAKRTKSKVPAL) are disordered. The segment covering 9 to 19 (RKPRKAKRTKS) has biased composition (basic residues). Asp89 is subject to 3-methylthioaspartic acid. The segment at 101 to 125 (SLDTAGVKDRKQARSKYGSKRPKSA) is disordered. A compositionally biased stretch (basic residues) spans 113 to 125 (ARSKYGSKRPKSA).

This sequence belongs to the universal ribosomal protein uS12 family. In terms of assembly, part of the 30S ribosomal subunit. Contacts proteins S8 and S17. May interact with IF1 in the 30S initiation complex.

Its function is as follows. With S4 and S5 plays an important role in translational accuracy. In terms of biological role, interacts with and stabilizes bases of the 16S rRNA that are involved in tRNA selection in the A site and with the mRNA backbone. Located at the interface of the 30S and 50S subunits, it traverses the body of the 30S subunit contacting proteins on the other side and probably holding the rRNA structure together. The combined cluster of proteins S8, S12 and S17 appears to hold together the shoulder and platform of the 30S subunit. The protein is Small ribosomal subunit protein uS12 of Nitrosomonas europaea (strain ATCC 19718 / CIP 103999 / KCTC 2705 / NBRC 14298).